Reading from the N-terminus, the 228-residue chain is Phosphatidate cytidylyltransferase (228 aa).

Transmembrane regions (helical) follow at residues 31 to 51 (FVIAILCLKTLFYILMILVGL), 65 to 85 (INYLLIGLIIIPIPISLLIFL), 93 to 113 (LVIMLYFCILWSVDTFAMIGG), 131 to 151 (WTGLITGTVSAGLVSVLVSLI), 165 to 185 (IYLFIISCILALIAQSSDLFI), and 206 to 226 (GVLDRFDSIILTAPVFFCINI).

This sequence belongs to the CDS family.

It localises to the cell membrane. It catalyses the reaction a 1,2-diacyl-sn-glycero-3-phosphate + CTP + H(+) = a CDP-1,2-diacyl-sn-glycerol + diphosphate. It functions in the pathway phospholipid metabolism; CDP-diacylglycerol biosynthesis; CDP-diacylglycerol from sn-glycerol 3-phosphate: step 3/3. The protein is Phosphatidate cytidylyltransferase (cdsA) of Rickettsia prowazekii (strain Madrid E).